We begin with the raw amino-acid sequence, 101 residues long: Small ribosomal subunit protein uS10 (101 aa).

It belongs to the universal ribosomal protein uS10 family. Part of the 30S ribosomal subunit.

Functionally, involved in the binding of tRNA to the ribosomes. This is Small ribosomal subunit protein uS10 from Corynebacterium efficiens (strain DSM 44549 / YS-314 / AJ 12310 / JCM 11189 / NBRC 100395).